Here is a 278-residue protein sequence, read N- to C-terminus: 3-methyl-2-oxobutanoate hydroxymethyltransferase (278 aa).

D43 and D82 together coordinate Mg(2+). 3-methyl-2-oxobutanoate contacts are provided by residues 43 to 44 (DS), D82, and K112. Mg(2+) is bound at residue E114. The Proton acceptor role is filled by E181.

The protein belongs to the PanB family. Homodecamer; pentamer of dimers. It depends on Mg(2+) as a cofactor.

It localises to the cytoplasm. The catalysed reaction is 3-methyl-2-oxobutanoate + (6R)-5,10-methylene-5,6,7,8-tetrahydrofolate + H2O = 2-dehydropantoate + (6S)-5,6,7,8-tetrahydrofolate. The protein operates within cofactor biosynthesis; (R)-pantothenate biosynthesis; (R)-pantoate from 3-methyl-2-oxobutanoate: step 1/2. Catalyzes the reversible reaction in which hydroxymethyl group from 5,10-methylenetetrahydrofolate is transferred onto alpha-ketoisovalerate to form ketopantoate. The protein is 3-methyl-2-oxobutanoate hydroxymethyltransferase of Desulfitobacterium hafniense (strain Y51).